Consider the following 637-residue polypeptide: Biosynthetic arginine decarboxylase (637 aa).

Position 101 is an N6-(pyridoxal phosphate)lysine (Lys101). 286–296 (FDVGGGLAVDY) is a binding site for substrate.

It belongs to the Orn/Lys/Arg decarboxylase class-II family. SpeA subfamily. The cofactor is Mg(2+). Requires pyridoxal 5'-phosphate as cofactor.

It carries out the reaction L-arginine + H(+) = agmatine + CO2. It functions in the pathway amine and polyamine biosynthesis; agmatine biosynthesis; agmatine from L-arginine: step 1/1. Its function is as follows. Catalyzes the biosynthesis of agmatine from arginine. This chain is Biosynthetic arginine decarboxylase, found in Shewanella piezotolerans (strain WP3 / JCM 13877).